A 143-amino-acid chain; its full sequence is Ribonuclease P protein component (143 aa).

Positions 111 to 143 are disordered; that stretch reads RVKRKGGGPGGNRRSAPPGSAPLTDDGRLRGEP.

It belongs to the RnpA family. In terms of assembly, consists of a catalytic RNA component (M1 or rnpB) and a protein subunit.

The enzyme catalyses Endonucleolytic cleavage of RNA, removing 5'-extranucleotides from tRNA precursor.. RNaseP catalyzes the removal of the 5'-leader sequence from pre-tRNA to produce the mature 5'-terminus. It can also cleave other RNA substrates such as 4.5S RNA. The protein component plays an auxiliary but essential role in vivo by binding to the 5'-leader sequence and broadening the substrate specificity of the ribozyme. The chain is Ribonuclease P protein component from Deinococcus geothermalis (strain DSM 11300 / CIP 105573 / AG-3a).